The chain runs to 494 residues: Sugar phosphate exchanger 3 (494 aa).

A helical transmembrane segment spans residues 16 to 36 (FSHHHVVVFLLTFFSYSLLHA). Asparagine 58 carries N-linked (GlcNAc...) asparagine glycosylation. Helical transmembrane passes span 81–101 (TLFLGTLDTIFLFSYAVGLFI), 113–133 (WVLSFGMCSSALVVFVFGALT), 147–167 (LWIVNGLLQSTGWPCVVAVMG), 177–197 (VVFGLWSACASVGNILGACLA), and 209–229 (FLVTASVQFAGGIVIFFGLLV). Asparagine 266 carries N-linked (GlcNAc...) asparagine glycosylation. The next 6 membrane-spanning stretches (helical) occupy residues 297 to 317 (LAYACLKLVNYSFFFWLPFYL), 333 to 353 (IWYDVGGIIGGTLQGFISDVL), 357 to 377 (APVLALSLLLAVGSLIGYSRS), 386 to 406 (LLMTVTGFFIGGPSNMISSAI), 428 to 448 (GIVDGSGSIGAAVGQYLVSLI), and 452 to 472 (LGWMWVFYFFILMTSCTIVFI).

Belongs to the major facilitator superfamily. Organophosphate:Pi antiporter (OPA) (TC 2.A.1.4) family. Interacts with ATRAID; the interaction is direct and both proteins are mutually dependent for their stability. In terms of processing, glycosylated. Expressed in liver, kidney, intestine and pancreas.

Its subcellular location is the endoplasmic reticulum membrane. The protein resides in the lysosome membrane. Its function is as follows. Unlike the other SLC37 members, lacks glucose-6-phosphate antiporter activity. In osteoclasts, forms a transporter complex with ATRAID for nitrogen-containing-bisphophonates (N-BPs) required for releasing N-BP molecules that have trafficked to lysosomes through fluid-phase endocytosis into the cytosol. The polypeptide is Sugar phosphate exchanger 3 (Homo sapiens (Human)).